We begin with the raw amino-acid sequence, 299 residues long: Cysteine synthase B (299 aa).

Position 45 is an N6-(pyridoxal phosphate)lysine (Lys-45). Residues Asn-75, 178-182 (GTTGT), and Ser-259 contribute to the pyridoxal 5'-phosphate site.

This sequence belongs to the cysteine synthase/cystathionine beta-synthase family. Pyridoxal 5'-phosphate is required as a cofactor.

It catalyses the reaction O-acetyl-L-serine + hydrogen sulfide = L-cysteine + acetate. The protein operates within amino-acid biosynthesis; L-cysteine biosynthesis; L-cysteine from L-serine: step 2/2. The chain is Cysteine synthase B (cysM) from Pseudomonas aeruginosa (strain ATCC 15692 / DSM 22644 / CIP 104116 / JCM 14847 / LMG 12228 / 1C / PRS 101 / PAO1).